The chain runs to 114 residues: Large ribosomal subunit protein bL19 (114 aa).

Belongs to the bacterial ribosomal protein bL19 family.

This protein is located at the 30S-50S ribosomal subunit interface and may play a role in the structure and function of the aminoacyl-tRNA binding site. The protein is Large ribosomal subunit protein bL19 (rplS) of Listeria innocua serovar 6a (strain ATCC BAA-680 / CLIP 11262).